A 284-amino-acid polypeptide reads, in one-letter code: 4-diphosphocytidyl-2-C-methyl-D-erythritol kinase (284 aa).

Lysine 14 is an active-site residue. Proline 98 to serine 108 provides a ligand contact to ATP. Residue aspartate 140 is part of the active site.

Belongs to the GHMP kinase family. IspE subfamily.

It carries out the reaction 4-CDP-2-C-methyl-D-erythritol + ATP = 4-CDP-2-C-methyl-D-erythritol 2-phosphate + ADP + H(+). It functions in the pathway isoprenoid biosynthesis; isopentenyl diphosphate biosynthesis via DXP pathway; isopentenyl diphosphate from 1-deoxy-D-xylulose 5-phosphate: step 3/6. Functionally, catalyzes the phosphorylation of the position 2 hydroxy group of 4-diphosphocytidyl-2C-methyl-D-erythritol. The polypeptide is 4-diphosphocytidyl-2-C-methyl-D-erythritol kinase (Shewanella baltica (strain OS223)).